Here is a 126-residue protein sequence, read N- to C-terminus: Glycerol dehydrogenase small subunit (126 aa).

The next 4 membrane-spanning stretches (helical) occupy residues 13 to 33 (WLTL…VIGG), 41 to 61 (GSTY…FMLM), 67 to 87 (AFLY…EVGF), and 92 to 112 (LLPR…TIPV).

The protein resides in the cell membrane. The catalysed reaction is glycerol + A = dihydroxyacetone + AH2. Its function is as follows. Catalyzes the oxidation of glycerol to glycerone. Also acts, more slowly, on a number of other polyols including D-sorbitol, D-arabinitol, D-mannitol, meso-erythritol, adonitol and propylene glycol. The polypeptide is Glycerol dehydrogenase small subunit (sldB) (Gluconobacter thailandicus).